Consider the following 231-residue polypeptide: Lipid A acyltransferase PagP (231 aa).

An N-terminal signal peptide occupies residues 1–23 (MNKLTVRNFIVGLLIVFSLNSFS). Low complexity predominate over residues 24 to 43 (SPPSISNSSSNSIDENSPIN). A disordered region spans residues 24-59 (SPPSISNSSSNSIDENSPINTFKISPDNQTSKKSDL). Catalysis depends on residues H100, D145, and S146.

The protein belongs to the lipid A palmitoyltransferase family. As to quaternary structure, homodimer.

The protein localises to the cell outer membrane. The enzyme catalyses a lipid A + a 1,2-diacyl-sn-glycero-3-phosphocholine = a hepta-acyl lipid A + a 2-acyl-sn-glycero-3-phosphocholine. It catalyses the reaction a lipid IVA + a 1,2-diacyl-sn-glycero-3-phosphocholine = a lipid IVB + a 2-acyl-sn-glycero-3-phosphocholine. The catalysed reaction is a lipid IIA + a 1,2-diacyl-sn-glycero-3-phosphocholine = a lipid IIB + a 2-acyl-sn-glycero-3-phosphocholine. Functionally, transfers a fatty acid residue from the sn-1 position of a phospholipid to the N-linked hydroxyfatty acid chain on the proximal unit of lipid A or its precursors. The protein is Lipid A acyltransferase PagP of Legionella longbeachae serogroup 1 (strain NSW150).